A 211-amino-acid polypeptide reads, in one-letter code: Probable nicotinate-nucleotide adenylyltransferase (211 aa).

Belongs to the NadD family.

The enzyme catalyses nicotinate beta-D-ribonucleotide + ATP + H(+) = deamido-NAD(+) + diphosphate. The protein operates within cofactor biosynthesis; NAD(+) biosynthesis; deamido-NAD(+) from nicotinate D-ribonucleotide: step 1/1. In terms of biological role, catalyzes the reversible adenylation of nicotinate mononucleotide (NaMN) to nicotinic acid adenine dinucleotide (NaAD). This chain is Probable nicotinate-nucleotide adenylyltransferase, found in Shewanella sediminis (strain HAW-EB3).